The chain runs to 485 residues: UDP-glycosyltransferase 91D1 (485 aa).

UDP-alpha-D-glucose contacts are provided by residues Ser-296, 355–356, 373–381, and 395–398; these read WA, HCGSGSIVE, and FCDQ.

The protein belongs to the UDP-glycosyltransferase family.

May glycosylate diterpenes or flavonols in leaves. The polypeptide is UDP-glycosyltransferase 91D1 (Stevia rebaudiana (Stevia)).